The sequence spans 158 residues: NAD(P)H-quinone oxidoreductase subunit J, chloroplastic (158 aa).

It belongs to the complex I 30 kDa subunit family. In terms of assembly, NDH is composed of at least 16 different subunits, 5 of which are encoded in the nucleus.

It localises to the plastid. The protein localises to the chloroplast thylakoid membrane. It catalyses the reaction a plastoquinone + NADH + (n+1) H(+)(in) = a plastoquinol + NAD(+) + n H(+)(out). It carries out the reaction a plastoquinone + NADPH + (n+1) H(+)(in) = a plastoquinol + NADP(+) + n H(+)(out). NDH shuttles electrons from NAD(P)H:plastoquinone, via FMN and iron-sulfur (Fe-S) centers, to quinones in the photosynthetic chain and possibly in a chloroplast respiratory chain. The immediate electron acceptor for the enzyme in this species is believed to be plastoquinone. Couples the redox reaction to proton translocation, and thus conserves the redox energy in a proton gradient. The sequence is that of NAD(P)H-quinone oxidoreductase subunit J, chloroplastic from Panax ginseng (Korean ginseng).